Consider the following 468-residue polypeptide: Glutamate--tRNA ligase 2 (468 aa).

The 'HIGH' region motif lies at 9–19; it reads PSPTGHLHIGG. Residues cysteine 98, cysteine 100, cysteine 125, and histidine 127 each coordinate Zn(2+). The short motif at 236 to 240 is the 'KMSKS' region element; the sequence is RLSKR. Residue lysine 239 participates in ATP binding.

This sequence belongs to the class-I aminoacyl-tRNA synthetase family. Glutamate--tRNA ligase type 1 subfamily. As to quaternary structure, monomer. Zn(2+) is required as a cofactor.

The protein resides in the cytoplasm. The enzyme catalyses tRNA(Glu) + L-glutamate + ATP = L-glutamyl-tRNA(Glu) + AMP + diphosphate. Its function is as follows. Catalyzes the attachment of glutamate to tRNA(Glu) in a two-step reaction: glutamate is first activated by ATP to form Glu-AMP and then transferred to the acceptor end of tRNA(Glu). The sequence is that of Glutamate--tRNA ligase 2 from Methylococcus capsulatus (strain ATCC 33009 / NCIMB 11132 / Bath).